Consider the following 80-residue polypeptide: uncharacterized protein (80 aa).

It belongs to the 2-oxoacid dehydrogenase family.

This is an uncharacterized protein from Mycobacterium tuberculosis (strain CDC 1551 / Oshkosh).